A 117-amino-acid chain; its full sequence is Large ribosomal subunit protein uL18 (117 aa).

Belongs to the universal ribosomal protein uL18 family. As to quaternary structure, part of the 50S ribosomal subunit; part of the 5S rRNA/L5/L18/L25 subcomplex. Contacts the 5S and 23S rRNAs.

In terms of biological role, this is one of the proteins that bind and probably mediate the attachment of the 5S RNA into the large ribosomal subunit, where it forms part of the central protuberance. In Vibrio atlanticus (strain LGP32) (Vibrio splendidus (strain Mel32)), this protein is Large ribosomal subunit protein uL18.